Consider the following 451-residue polypeptide: Ribonuclease J (451 aa).

Positions 84, 86, 88, 89, 155, and 177 each coordinate Zn(2+). Position 384–388 (384–388 (HVSGH)) interacts with substrate. H410 is a binding site for Zn(2+).

Belongs to the metallo-beta-lactamase superfamily. RNA-metabolizing metallo-beta-lactamase-like family. Archaeal RNase J subfamily. As to quaternary structure, homodimer. The cofactor is Zn(2+).

The protein resides in the cytoplasm. Inhibited by 1,10-phenanthroline. A highly processive 5'-3' exoribonuclease; no evidence has been seen for endonuclease activity. Prefers 5'-phosphate or 5'-hydroxyl ends; 5'-triphosphate substrates are very poorly degraded, does not degrade circular RNA. Does not degrade pre-tRNA(Trp) suggesting it is inhibited by strong secondary structures. Also degrades ssNDA but not dsDNA. In Pyrococcus abyssi (strain GE5 / Orsay), this protein is Ribonuclease J.